The sequence spans 156 residues: MNLNATILGQAIAFVLFVLFCMKYVWPPIMAAIEKRQKEIADGLSSAERAKKDLDLAKADAGEQLAKAKAEAQAIIESANKQRTQMIEEAKAEAEQERSKIVAQAQSELEAERKRAREELRKQVAMLAIAGAEKIIERSVDEAANSDIVDKLVAEL.

A helical transmembrane segment spans residues 11-31 (AIAFVLFVLFCMKYVWPPIMA).

It belongs to the ATPase B chain family. As to quaternary structure, F-type ATPases have 2 components, F(1) - the catalytic core - and F(0) - the membrane proton channel. F(1) has five subunits: alpha(3), beta(3), gamma(1), delta(1), epsilon(1). F(0) has three main subunits: a(1), b(2) and c(10-14). The alpha and beta chains form an alternating ring which encloses part of the gamma chain. F(1) is attached to F(0) by a central stalk formed by the gamma and epsilon chains, while a peripheral stalk is formed by the delta and b chains.

It localises to the cell inner membrane. Its function is as follows. F(1)F(0) ATP synthase produces ATP from ADP in the presence of a proton or sodium gradient. F-type ATPases consist of two structural domains, F(1) containing the extramembraneous catalytic core and F(0) containing the membrane proton channel, linked together by a central stalk and a peripheral stalk. During catalysis, ATP synthesis in the catalytic domain of F(1) is coupled via a rotary mechanism of the central stalk subunits to proton translocation. Functionally, component of the F(0) channel, it forms part of the peripheral stalk, linking F(1) to F(0). This is ATP synthase subunit b from Proteus mirabilis (strain HI4320).